A 96-amino-acid polypeptide reads, in one-letter code: Ubiquitin-related modifier 1 (96 aa).

Gly96 carries the 1-thioglycine modification. Gly96 participates in a covalent cross-link: Glycyl lysine isopeptide (Gly-Lys) (interchain with K-? in acceptor proteins).

The protein belongs to the URM1 family. Post-translationally, C-terminal thiocarboxylation occurs in 2 steps, it is first acyl-adenylated (-COAMP) via the hesA/moeB/thiF part of UBA4, then thiocarboxylated (-COSH) via the rhodanese domain of UBA4.

It is found in the cytoplasm. The protein operates within tRNA modification; 5-methoxycarbonylmethyl-2-thiouridine-tRNA biosynthesis. In terms of biological role, acts as a sulfur carrier required for 2-thiolation of mcm(5)S(2)U at tRNA wobble positions of cytosolic tRNA(Lys), tRNA(Glu) and tRNA(Gln). Serves as sulfur donor in tRNA 2-thiolation reaction by being thiocarboxylated (-COSH) at its C-terminus by the MOCS3 homolog UBA4. The sulfur is then transferred to tRNA to form 2-thiolation of mcm(5)S(2)U. Prior mcm(5) tRNA modification by the elongator complex is required for 2-thiolation. Also acts as a ubiquitin-like protein (UBL) that is covalently conjugated via an isopeptide bond to lysine residues of target proteins such as AHP1. The thiocarboxylated form serves as substrate for conjugation and oxidative stress specifically induces the formation of UBL-protein conjugates. This chain is Ubiquitin-related modifier 1, found in Encephalitozoon cuniculi (strain GB-M1) (Microsporidian parasite).